The chain runs to 667 residues: MTQEKKAEDPDRGMDTTSAAPRLWSTHCDGEVLLRLSKHGPGHETPMTIPELFQESVERFGAYPALASKNGKKWDTLTFSQYYDVCRKAARSLIKLGLQRFHGVGILGFNSVEWVVAALGAILAGGLCVGIYATNSAEACQYVIKQANVNVLIVENDQQLQKILSIPPDKMETVKAIVQYRLPLMENSTNLYSWQDFMELGNAIPNIQLDRVILSQKANQCAVIIYTSGTTGSPKGVMLSHDNITWTAGAMAREIELIHVSGKQDTIVSYLPLSHIAAQLMDIWIPIKVGVLTFFAQPDALRGTLVYTLQEVKPTYFLGVPRVWEKMQDTIKENVAKSSNLRKKAFAWAKMLGLKVNTKKMLGKRDIPMNYRMAKALVFTKVRTSLGLDNCHTFFSGASPLSQDVSEFFLSLDIPIGEIYGMTECSGPHTVSCKSIYRVLSCGKVLNGCKNMLYKQNKDGVGEVCMWGRHVFMGYLGKEDATLEVLDEDGWLHSGDIGRLDSHDFLYITGRIKEVLITAGGENIWPIPIETLVKEKIPIISHAMLVGDKAKFLSMLLTLKCETDQMSGEPLDKLNLEAISFCQMLGSQAVTVSDILKIRDPVVYTAIQYGIDIVNQQAVSDSHRIRKWIILEKDFSIQGGELGPTSKLKRDLITQKYKAQIDNMYSS.

The span at 1 to 14 shows a compositional bias: basic and acidic residues; it reads MTQEKKAEDPDRGM. The tract at residues 1-20 is disordered; the sequence is MTQEKKAEDPDRGMDTTSAA. ATP contacts are provided by residues 227-235, 418-423, Asp496, Arg511, and Arg624; these read TSGTTGSPK and EIYGMT.

The protein belongs to the ATP-dependent AMP-binding enzyme family. Bubblegum subfamily.

The protein resides in the cytoplasm. The protein localises to the membrane. The catalysed reaction is a long-chain fatty acid + ATP + CoA = a long-chain fatty acyl-CoA + AMP + diphosphate. It catalyses the reaction (5Z,8Z,11Z,14Z)-eicosatetraenoate + ATP + CoA = (5Z,8Z,11Z,14Z)-eicosatetraenoyl-CoA + AMP + diphosphate. It carries out the reaction hexadecanoate + ATP + CoA = hexadecanoyl-CoA + AMP + diphosphate. The enzyme catalyses (9Z)-octadecenoate + ATP + CoA = (9Z)-octadecenoyl-CoA + AMP + diphosphate. The catalysed reaction is (9Z,12Z)-octadecadienoate + ATP + CoA = (9Z,12Z)-octadecadienoyl-CoA + AMP + diphosphate. It catalyses the reaction tetracosanoate + ATP + CoA = tetracosanoyl-CoA + AMP + diphosphate. Its function is as follows. Catalyzes the conversion of fatty acids such as long chain and very long-chain fatty acids to their active form acyl-CoAs for both synthesis of cellular lipids, and degradation via beta-oxidation. Can activate diverse saturated, monosaturated and polyunsaturated fatty acids. Has increased ability to activate oleic and linoleic acid. May play a role in spermatogenesis. This Rattus norvegicus (Rat) protein is Long-chain-fatty-acid--CoA ligase ACSBG2.